Here is a 256-residue protein sequence, read N- to C-terminus: Nickel import ATP-binding protein NikD (256 aa).

In terms of domain architecture, ABC transporter spans 6–245 (LEIRGLRIET…PASATARTLL (240 aa)). Position 38 to 45 (38 to 45 (GASGSGKS)) interacts with ATP.

This sequence belongs to the ABC transporter superfamily. Nickel importer (TC 3.A.1.5.3) family. The complex is composed of two ATP-binding proteins (NikD and NikE), two transmembrane proteins (NikB and NikC) and a solute-binding protein (NikA).

It is found in the cell inner membrane. It catalyses the reaction Ni(2+)(out) + ATP + H2O = Ni(2+)(in) + ADP + phosphate + H(+). Part of the ABC transporter complex NikABCDE involved in nickel import. Responsible for energy coupling to the transport system. This Pseudomonas putida (strain ATCC 47054 / DSM 6125 / CFBP 8728 / NCIMB 11950 / KT2440) protein is Nickel import ATP-binding protein NikD.